The primary structure comprises 461 residues: Ribulose bisphosphate carboxylase (461 aa).

Substrate is bound at residue N112. Catalysis depends on K167, which acts as the Proton acceptor. K169 lines the substrate pocket. Residues K192, D194, and E195 each contribute to the Mg(2+) site. Position 192 is an N6-carboxylysine (K192). H288 functions as the Proton acceptor in the catalytic mechanism. Substrate-binding residues include R289, H322, and S369.

This sequence belongs to the RuBisCO large chain family. Type II subfamily. As to quaternary structure, homodimer. Mg(2+) is required as a cofactor.

It catalyses the reaction 2 (2R)-3-phosphoglycerate + 2 H(+) = D-ribulose 1,5-bisphosphate + CO2 + H2O. The catalysed reaction is D-ribulose 1,5-bisphosphate + O2 = 2-phosphoglycolate + (2R)-3-phosphoglycerate + 2 H(+). Functionally, ruBisCO catalyzes two reactions: the carboxylation of D-ribulose 1,5-bisphosphate, the primary event in carbon dioxide fixation, as well as the oxidative fragmentation of the pentose substrate. Both reactions occur simultaneously and in competition at the same active site. The chain is Ribulose bisphosphate carboxylase from Rhodopseudomonas palustris (strain HaA2).